Here is a 778-residue protein sequence, read N- to C-terminus: Serine/threonine-protein kinase BRSK1 (778 aa).

Gly residues predominate over residues 1-12 (MSSGAKEGGGGS). The tract at residues 1–29 (MSSGAKEGGGGSPAYHLPHPHPHPPQHAQ) is disordered. Residues 34–285 (YRLEKTLGKG…LEQIQKHPWY (252 aa)) enclose the Protein kinase domain. ATP contacts are provided by residues 40–48 (LGKGQTGLV) and K63. The active-site Proton acceptor is the D156. T189 carries the post-translational modification Phosphothreonine; by LKB1. Residues 314–356 (ELDPDVLESMASLGCFRDRERLHRELRSEEENQEKMIYYLLLD) form the UBA domain. The segment covering 362-383 (PSCEDQDLPPRNDVDPPRKRVD) has biased composition (basic and acidic residues). The interval 362–548 (PSCEDQDLPP…SPGGGVGGAA (187 aa)) is disordered. Residues S399, S443, S447, and S450 each carry the phosphoserine modification. A compositionally biased stretch (low complexity) spans 430 to 457 (SRSVSGASTGLSSSPLSSPRSPVFSFSP). Omega-N-methylarginine is present on residues R466, R481, R484, and R498. Residues 491–508 (QPPPPSARSTPLPGPPGS) are compositionally biased toward pro residues. A Phosphoserine modification is found at S508. Residues 509–533 (PRSSGGTPLHSPLHTPRASPTGTPG) are compositionally biased toward low complexity. R525 is modified (omega-N-methylarginine). Residues T529 and T535 each carry the phosphothreonine modification. An Omega-N-methylarginine modification is found at R550. Position 583 is a phosphothreonine (T583). A phosphoserine mark is found at S586, S587, and S601. The interval 719-778 (QPSVQALADEKNGAQTRPAGAPPRSLQPPPGRPDPELSSSPRRGPPKDKKLLATNGTPLP) is disordered.

Belongs to the protein kinase superfamily. CAMK Ser/Thr protein kinase family. SNF1 subfamily. The cofactor is Mg(2+). Post-translationally, phosphorylated at Thr-189 by STK11/LKB1 in complex with STE20-related adapter-alpha (STRADA) pseudo kinase and CAB39. Not phosphorylated at Thr-189 by CaMKK2. In contrast, it is phosphorylated and activated by CaMKK1. May be inactivated via dephosphorylation of Thr-189 by PP2C. In terms of tissue distribution, widely expressed, with highest levels in brain and testis. Protein levels remain constant throughout the cell cycle.

Its subcellular location is the cytoplasm. It is found in the nucleus. The protein localises to the cytoskeleton. It localises to the microtubule organizing center. The protein resides in the centrosome. Its subcellular location is the synapse. It is found in the presynaptic active zone. The protein localises to the cytoplasmic vesicle. It localises to the secretory vesicle. The protein resides in the synaptic vesicle. The enzyme catalyses L-seryl-[protein] + ATP = O-phospho-L-seryl-[protein] + ADP + H(+). It carries out the reaction L-threonyl-[protein] + ATP = O-phospho-L-threonyl-[protein] + ADP + H(+). It catalyses the reaction L-seryl-[tau protein] + ATP = O-phospho-L-seryl-[tau protein] + ADP + H(+). The catalysed reaction is L-threonyl-[tau protein] + ATP = O-phospho-L-threonyl-[tau protein] + ADP + H(+). Activated by phosphorylation on Thr-189 by STK11/LKB1. Serine/threonine-protein kinase that plays a key role in polarization of neurons and centrosome duplication. Phosphorylates CDC25B, CDC25C, MAPT/TAU, RIMS1, TUBG1, TUBG2 and WEE1. Following phosphorylation and activation by STK11/LKB1, acts as a key regulator of polarization of cortical neurons, probably by mediating phosphorylation of microtubule-associated proteins such as MAPT/TAU at 'Thr-529' and 'Ser-579'. Also regulates neuron polarization by mediating phosphorylation of WEE1 at 'Ser-642' in postmitotic neurons, leading to down-regulate WEE1 activity in polarized neurons. In neurons, localizes to synaptic vesicles and plays a role in neurotransmitter release, possibly by phosphorylating RIMS1. Also acts as a positive regulator of centrosome duplication by mediating phosphorylation of gamma-tubulin (TUBG1 and TUBG2) at 'Ser-131', leading to translocation of gamma-tubulin and its associated proteins to the centrosome. Involved in the UV-induced DNA damage checkpoint response, probably by inhibiting CDK1 activity through phosphorylation and activation of WEE1, and inhibition of CDC25B and CDC25C. This Homo sapiens (Human) protein is Serine/threonine-protein kinase BRSK1 (BRSK1).